The following is a 946-amino-acid chain: Bifunctional glutamine synthetase adenylyltransferase/adenylyl-removing enzyme (946 aa).

The segment at 1 to 440 (MKPLSSPLQQ…VFNELIGDDE (440 aa)) is adenylyl removase. The interval 449–946 (SEQWRELWQD…ASWQKWLVEE (498 aa)) is adenylyl transferase.

The protein belongs to the GlnE family. Requires Mg(2+) as cofactor.

The enzyme catalyses [glutamine synthetase]-O(4)-(5'-adenylyl)-L-tyrosine + phosphate = [glutamine synthetase]-L-tyrosine + ADP. It catalyses the reaction [glutamine synthetase]-L-tyrosine + ATP = [glutamine synthetase]-O(4)-(5'-adenylyl)-L-tyrosine + diphosphate. In terms of biological role, involved in the regulation of glutamine synthetase GlnA, a key enzyme in the process to assimilate ammonia. When cellular nitrogen levels are high, the C-terminal adenylyl transferase (AT) inactivates GlnA by covalent transfer of an adenylyl group from ATP to specific tyrosine residue of GlnA, thus reducing its activity. Conversely, when nitrogen levels are low, the N-terminal adenylyl removase (AR) activates GlnA by removing the adenylyl group by phosphorolysis, increasing its activity. The regulatory region of GlnE binds the signal transduction protein PII (GlnB) which indicates the nitrogen status of the cell. This is Bifunctional glutamine synthetase adenylyltransferase/adenylyl-removing enzyme from Shigella flexneri.